A 428-amino-acid chain; its full sequence is tRNA(Ile)-lysidine synthase (428 aa).

Residue Ser-28–Ser-33 participates in ATP binding.

It belongs to the tRNA(Ile)-lysidine synthase family.

The protein resides in the cytoplasm. It catalyses the reaction cytidine(34) in tRNA(Ile2) + L-lysine + ATP = lysidine(34) in tRNA(Ile2) + AMP + diphosphate + H(+). Its function is as follows. Ligates lysine onto the cytidine present at position 34 of the AUA codon-specific tRNA(Ile) that contains the anticodon CAU, in an ATP-dependent manner. Cytidine is converted to lysidine, thus changing the amino acid specificity of the tRNA from methionine to isoleucine. The sequence is that of tRNA(Ile)-lysidine synthase from Streptococcus pyogenes serotype M1.